A 281-amino-acid chain; its full sequence is Bifunctional protein FolD (281 aa).

NADP(+) contacts are provided by residues 164–166, S189, and I230; that span reads GRS.

It belongs to the tetrahydrofolate dehydrogenase/cyclohydrolase family. Homodimer.

It catalyses the reaction (6R)-5,10-methylene-5,6,7,8-tetrahydrofolate + NADP(+) = (6R)-5,10-methenyltetrahydrofolate + NADPH. It carries out the reaction (6R)-5,10-methenyltetrahydrofolate + H2O = (6R)-10-formyltetrahydrofolate + H(+). Its pathway is one-carbon metabolism; tetrahydrofolate interconversion. In terms of biological role, catalyzes the oxidation of 5,10-methylenetetrahydrofolate to 5,10-methenyltetrahydrofolate and then the hydrolysis of 5,10-methenyltetrahydrofolate to 10-formyltetrahydrofolate. The chain is Bifunctional protein FolD from Pelagibacter ubique (strain HTCC1062).